The sequence spans 370 residues: 3-isopropylmalate dehydrogenase (370 aa).

77-90 lines the NAD(+) pocket; the sequence is GPKWDGVPYDARPE. Substrate is bound by residues arginine 97, arginine 107, arginine 135, and aspartate 226. Mg(2+) contacts are provided by aspartate 226, aspartate 250, and aspartate 254. 290 to 302 is a binding site for NAD(+); that stretch reads GSAPDIAGKGMAN.

Belongs to the isocitrate and isopropylmalate dehydrogenases family. LeuB type 1 subfamily. As to quaternary structure, homodimer. Mg(2+) is required as a cofactor. Mn(2+) serves as cofactor.

It localises to the cytoplasm. The enzyme catalyses (2R,3S)-3-isopropylmalate + NAD(+) = 4-methyl-2-oxopentanoate + CO2 + NADH. Its pathway is amino-acid biosynthesis; L-leucine biosynthesis; L-leucine from 3-methyl-2-oxobutanoate: step 3/4. Functionally, catalyzes the oxidation of 3-carboxy-2-hydroxy-4-methylpentanoate (3-isopropylmalate) to 3-carboxy-4-methyl-2-oxopentanoate. The product decarboxylates to 4-methyl-2 oxopentanoate. In Rhodopseudomonas palustris (strain ATCC BAA-98 / CGA009), this protein is 3-isopropylmalate dehydrogenase.